Reading from the N-terminus, the 369-residue chain is UDP-3-O-acylglucosamine N-acyltransferase (369 aa).

Residue His252 is the Proton acceptor of the active site. The tract at residues Glu348–Ser369 is disordered.

The protein belongs to the transferase hexapeptide repeat family. LpxD subfamily. Homotrimer.

The catalysed reaction is a UDP-3-O-[(3R)-3-hydroxyacyl]-alpha-D-glucosamine + a (3R)-hydroxyacyl-[ACP] = a UDP-2-N,3-O-bis[(3R)-3-hydroxyacyl]-alpha-D-glucosamine + holo-[ACP] + H(+). The protein operates within bacterial outer membrane biogenesis; LPS lipid A biosynthesis. Its function is as follows. Catalyzes the N-acylation of UDP-3-O-acylglucosamine using 3-hydroxyacyl-ACP as the acyl donor. Is involved in the biosynthesis of lipid A, a phosphorylated glycolipid that anchors the lipopolysaccharide to the outer membrane of the cell. The sequence is that of UDP-3-O-acylglucosamine N-acyltransferase from Cupriavidus metallidurans (strain ATCC 43123 / DSM 2839 / NBRC 102507 / CH34) (Ralstonia metallidurans).